Reading from the N-terminus, the 243-residue chain is Orotidine 5'-phosphate decarboxylase (243 aa).

Substrate contacts are provided by residues Asp-19, Lys-41, 69 to 78 (DLKFFDIPAT), Thr-124, Arg-185, Gln-194, Gly-214, and Arg-215. Lys-71 (proton donor) is an active-site residue.

The protein belongs to the OMP decarboxylase family. Type 1 subfamily. In terms of assembly, homodimer.

It catalyses the reaction orotidine 5'-phosphate + H(+) = UMP + CO2. It functions in the pathway pyrimidine metabolism; UMP biosynthesis via de novo pathway; UMP from orotate: step 2/2. Functionally, catalyzes the decarboxylation of orotidine 5'-monophosphate (OMP) to uridine 5'-monophosphate (UMP). The sequence is that of Orotidine 5'-phosphate decarboxylase from Xanthomonas campestris pv. campestris (strain B100).